The chain runs to 446 residues: Mitochondrial ribonuclease P protein 1 homolog (446 aa).

A mitochondrion-targeting transit peptide spans 1–24 (MLKHFARWRLGSQLLKGCAAPVRQ). The disordered stretch occupies residues 41–67 (PQKKFVNPFSQPAPALSNDTISENKEE). Phosphoserine occurs at positions 50 and 57. Phosphothreonine is present on Thr60. Ser62 is modified (phosphoserine). A coiled-coil region spans residues 119 to 158 (LWQIEMKKEADQRKKAERAKEAERRVAEMRKEREENTHII). An SAM-dependent MTase TRM10-type domain is found at 179-373 (QNNRLTRAMQ…KHVPRRKVVQ (195 aa)).

Belongs to the class IV-like SAM-binding methyltransferase superfamily. TRM10 family. Component of mitochondrial ribonuclease P, a complex composed of rswl/MRPP1, scu/MRPP2 and mldr/MRPP3.

It localises to the mitochondrion. In terms of biological role, mitochondrial tRNA N1-methyltransferase involved in mitochondrial tRNA maturation. Component of mitochondrial ribonuclease P, a complex composed of rswl/MRPP1, scu/MRPP2 and mldr/MRPP3., which cleaves tRNA molecules in their 5'-ends. Essential for the structural and functional integrity of mitochondria. Function is essential for pupal development. The protein is Mitochondrial ribonuclease P protein 1 homolog of Drosophila melanogaster (Fruit fly).